Here is a 94-residue protein sequence, read N- to C-terminus: Co-chaperonin GroES (94 aa).

This sequence belongs to the GroES chaperonin family. As to quaternary structure, heptamer of 7 subunits arranged in a ring. Interacts with the chaperonin GroEL.

It is found in the cytoplasm. Together with the chaperonin GroEL, plays an essential role in assisting protein folding. The GroEL-GroES system forms a nano-cage that allows encapsulation of the non-native substrate proteins and provides a physical environment optimized to promote and accelerate protein folding. GroES binds to the apical surface of the GroEL ring, thereby capping the opening of the GroEL channel. The chain is Co-chaperonin GroES from Halalkalibacterium halodurans (strain ATCC BAA-125 / DSM 18197 / FERM 7344 / JCM 9153 / C-125) (Bacillus halodurans).